Reading from the N-terminus, the 234-residue chain is Preprocaerulein type-4 (234 aa).

The signal sequence occupies residues 1-26 (MFKGILLCVLFAVLSANPLSQPEGFA). Positions 27-73 (DEEERDVRGLASLLGKALKAALKIGANALGGSPQQREANDERRFADG) are excised as a propeptide. A Sulfotyrosine modification is found at tyrosine 77. Phenylalanine 83 carries the post-translational modification Phenylalanine amide. A propeptide spanning residues 87–137 (DDEDDVNERDVRGFGSFLGKALKAGLKIGTHFLGGAPQQREANDERRFADG) is cleaved from the precursor. Tyrosine 141 carries the post-translational modification Sulfotyrosine. Phenylalanine amide is present on phenylalanine 147. Residues 151–152 (DG) constitute a propeptide that is removed on maturation. Tyrosine 156 is subject to Sulfotyrosine. Residue phenylalanine 162 is modified to Phenylalanine amide. A propeptide spanning residues 166 to 216 (DDEDDVHERDVRGFGSFLGKALKAALKIGANALGGSPQQREANDERRFADG) is cleaved from the precursor. The tract at residues 198–234 (LGGSPQQREANDERRFADGQQDYTGWMDFGRRNGEDD) is disordered. Tyrosine 220 carries the sulfotyrosine modification. Phenylalanine amide is present on phenylalanine 226. The propeptide occupies 230–234 (NGEDD).

Belongs to the gastrin/cholecystokinin family. Expressed by the skin glands.

The protein localises to the secreted. In terms of biological role, the pharmacological activities of caerulein are quite similar to the physiological activities of gastrin and related peptides. The sequence is that of Preprocaerulein type-4 from Xenopus borealis (Kenyan clawed frog).